A 325-amino-acid chain; its full sequence is tRNA N6-adenosine threonylcarbamoyltransferase (325 aa).

Residues His107 and His111 each coordinate Fe cation. Residues 129 to 133 (LVSGG), Asp162, Gly175, and Asn265 each bind substrate. Asp293 serves as a coordination point for Fe cation.

It belongs to the KAE1 / TsaD family. Requires Fe(2+) as cofactor.

Its subcellular location is the cytoplasm. It catalyses the reaction L-threonylcarbamoyladenylate + adenosine(37) in tRNA = N(6)-L-threonylcarbamoyladenosine(37) in tRNA + AMP + H(+). Required for the formation of a threonylcarbamoyl group on adenosine at position 37 (t(6)A37) in tRNAs that read codons beginning with adenine. Is involved in the transfer of the threonylcarbamoyl moiety of threonylcarbamoyl-AMP (TC-AMP) to the N6 group of A37, together with TsaE and TsaB. TsaD likely plays a direct catalytic role in this reaction. The sequence is that of tRNA N6-adenosine threonylcarbamoyltransferase from Sulfurimonas denitrificans (strain ATCC 33889 / DSM 1251) (Thiomicrospira denitrificans (strain ATCC 33889 / DSM 1251)).